A 156-amino-acid chain; its full sequence is S-ribosylhomocysteine lyase (156 aa).

The Fe cation site is built by His-56, His-60, and Cys-123.

Belongs to the LuxS family. In terms of assembly, homodimer. Fe cation serves as cofactor.

It carries out the reaction S-(5-deoxy-D-ribos-5-yl)-L-homocysteine = (S)-4,5-dihydroxypentane-2,3-dione + L-homocysteine. Functionally, involved in the synthesis of autoinducer 2 (AI-2) which is secreted by bacteria and is used to communicate both the cell density and the metabolic potential of the environment. The regulation of gene expression in response to changes in cell density is called quorum sensing. Catalyzes the transformation of S-ribosylhomocysteine (RHC) to homocysteine (HC) and 4,5-dihydroxy-2,3-pentadione (DPD). This Staphylococcus epidermidis (strain ATCC 35984 / DSM 28319 / BCRC 17069 / CCUG 31568 / BM 3577 / RP62A) protein is S-ribosylhomocysteine lyase.